The following is a 532-amino-acid chain: E3 ubiquitin-protein ligase MGRN1 (532 aa).

Glycine 2 is lipidated: N-myristoyl glycine. The RING-type zinc-finger motif lies at 277 to 316 (ECVVCLSDLRDTLILPCRHLCLCTSCADTLRYQANNCPIC). The Required for TSG101-binding motif lies at 384–387 (PSAP). Tyrosine 389 carries the post-translational modification Phosphotyrosine. The disordered stretch occupies residues 419-518 (LQKGKTQSKS…QPVPPADIYL (100 aa)). The span at 422 to 435 (GKTQSKSPDSTLRS) shows a compositional bias: polar residues. Serine 428, serine 449, serine 452, and serine 501 each carry phosphoserine. A compositionally biased stretch (acidic residues) spans 442-453 (EEDEEKLSEDSD).

As to quaternary structure, interacts with MC1R and MC4R. Interacts with TSG101. Interacts with mislocalized cytosolically exposed PRNP; this interaction alters MGRN1 subcellular location and causes lysosomal enlargement. Autoubiquitinated in vitro. In terms of tissue distribution, widely expressed, with highest levels in brain, heart, kidney and liver. In the CNS, especially prominent in the Purkinje cells of the cerebellum. In the skin, expressed in the basal layer of the epidermis and hair follicles, primarily in the outer root sheath. Isoforms 1, 3, 4 and 5 are equally expressed in the liver. Isoforms 1, 3 and 4 are most abundant in brain, kidney and heart, respectively.

It localises to the early endosome. Its subcellular location is the cytoplasm. The protein localises to the cell membrane. The protein resides in the nucleus. The catalysed reaction is S-ubiquitinyl-[E2 ubiquitin-conjugating enzyme]-L-cysteine + [acceptor protein]-L-lysine = [E2 ubiquitin-conjugating enzyme]-L-cysteine + N(6)-ubiquitinyl-[acceptor protein]-L-lysine.. It functions in the pathway protein modification; protein ubiquitination. E3 ubiquitin-protein ligase. Mediates TSG101 monoubiquitination at multiple sites. Plays a role in the regulation of endosome-to-lysosome trafficking. Impairs MC1R- and MC4R-signaling by competing with GNAS-binding to MCRs and inhibiting agonist-induced cAMP production. Does not inhibit ADRB2-signaling. Does not promote MC1R ubiquitination. Also acts as a negative regulator of hedgehog signaling. The sequence is that of E3 ubiquitin-protein ligase MGRN1 (Mgrn1) from Mus musculus (Mouse).